The chain runs to 130 residues: Aspartate 1-decarboxylase (130 aa).

Ser-25 (schiff-base intermediate with substrate; via pyruvic acid) is an active-site residue. Ser-25 is subject to Pyruvic acid (Ser). Residue Thr-57 coordinates substrate. The active-site Proton donor is the Tyr-58. Residue 73–75 (GAT) coordinates substrate.

This sequence belongs to the PanD family. As to quaternary structure, heterooctamer of four alpha and four beta subunits. Pyruvate is required as a cofactor. In terms of processing, is synthesized initially as an inactive proenzyme, which is activated by self-cleavage at a specific serine bond to produce a beta-subunit with a hydroxyl group at its C-terminus and an alpha-subunit with a pyruvoyl group at its N-terminus.

Its subcellular location is the cytoplasm. It catalyses the reaction L-aspartate + H(+) = beta-alanine + CO2. It participates in cofactor biosynthesis; (R)-pantothenate biosynthesis; beta-alanine from L-aspartate: step 1/1. In terms of biological role, catalyzes the pyruvoyl-dependent decarboxylation of aspartate to produce beta-alanine. The chain is Aspartate 1-decarboxylase from Lactiplantibacillus plantarum (strain ATCC BAA-793 / NCIMB 8826 / WCFS1) (Lactobacillus plantarum).